A 387-amino-acid chain; its full sequence is 3-ketoacyl-CoA thiolase (387 aa).

Cysteine 91 serves as the catalytic Acyl-thioester intermediate. Residues histidine 343 and cysteine 373 each act as proton acceptor in the active site.

It belongs to the thiolase-like superfamily. Thiolase family. Heterotetramer of two alpha chains (FadB) and two beta chains (FadA).

It is found in the cytoplasm. It carries out the reaction an acyl-CoA + acetyl-CoA = a 3-oxoacyl-CoA + CoA. It functions in the pathway lipid metabolism; fatty acid beta-oxidation. Functionally, catalyzes the final step of fatty acid oxidation in which acetyl-CoA is released and the CoA ester of a fatty acid two carbons shorter is formed. This is 3-ketoacyl-CoA thiolase from Shewanella sp. (strain W3-18-1).